We begin with the raw amino-acid sequence, 252 residues long: Triosephosphate isomerase (252 aa).

Residue 11-13 coordinates substrate; that stretch reads NWK. His97 functions as the Electrophile in the catalytic mechanism. The active-site Proton acceptor is the Glu169. Substrate-binding positions include Gly175, Ser215, and 236–237; that span reads GG.

The protein belongs to the triosephosphate isomerase family. Homodimer.

It localises to the cytoplasm. The catalysed reaction is D-glyceraldehyde 3-phosphate = dihydroxyacetone phosphate. It participates in carbohydrate biosynthesis; gluconeogenesis. It functions in the pathway carbohydrate degradation; glycolysis; D-glyceraldehyde 3-phosphate from glycerone phosphate: step 1/1. Functionally, involved in the gluconeogenesis. Catalyzes stereospecifically the conversion of dihydroxyacetone phosphate (DHAP) to D-glyceraldehyde-3-phosphate (G3P). This Mycoplasmoides gallisepticum (strain R(low / passage 15 / clone 2)) (Mycoplasma gallisepticum) protein is Triosephosphate isomerase.